Reading from the N-terminus, the 201-residue chain is Glycerol-3-phosphate acyltransferase (201 aa).

The next 5 membrane-spanning stretches (helical) occupy residues 10 to 30 (MLIG…GLIL), 60 to 80 (LAAA…LIAA), 86 to 106 (AAIA…WIGF), 116 to 136 (LGVL…AWIV), and 166 to 186 (ALAA…RANI).

Belongs to the PlsY family. Probably interacts with PlsX.

It localises to the cell inner membrane. It catalyses the reaction an acyl phosphate + sn-glycerol 3-phosphate = a 1-acyl-sn-glycero-3-phosphate + phosphate. Its pathway is lipid metabolism; phospholipid metabolism. Functionally, catalyzes the transfer of an acyl group from acyl-phosphate (acyl-PO(4)) to glycerol-3-phosphate (G3P) to form lysophosphatidic acid (LPA). This enzyme utilizes acyl-phosphate as fatty acyl donor, but not acyl-CoA or acyl-ACP. The chain is Glycerol-3-phosphate acyltransferase from Brucella canis (strain ATCC 23365 / NCTC 10854 / RM-666).